Here is a 215-residue protein sequence, read N- to C-terminus: Glutathione S-transferase F9 (215 aa).

The region spanning 2-81 is the GST N-terminal domain; sequence VLKVYGPHFA…YVAEKYRSQG (80 aa). Position 11–12 (11–12) interacts with glutathione; that stretch reads AS. S12 bears the Phosphoserine mark. M35 carries the methionine sulfoxide modification. Glutathione contacts are provided by residues 39–40, 52–53, and 65–66; these read HK, TV, and ES. The GST C-terminal domain maps to 88–215; it reads TVEDRGQVEQ…ETVAKYSFPA (128 aa). Methionine sulfoxide is present on residues M118, M123, and M184.

This sequence belongs to the GST superfamily. Phi family. Oxidated at Met-35, Met-118, Met-123 and Met-184 in oxidative stress conditions (e.g. hydrogen peroxide H(2)O(2)).

The protein resides in the cytoplasm. The protein localises to the cytosol. The enzyme catalyses RX + glutathione = an S-substituted glutathione + a halide anion + H(+). Redox-regulated enzyme; in oxidative stress conditions methionine oxidation ensure a thermodynamic and structural compensatory mechanism to guarantee H(2)O(2) peroxidase activity despite transferase activity inhibition. Functionally, in vitro, possesses glutathione S-transferase activity toward 1-chloro-2,4-dinitrobenzene (CDNB) and benzyl isothiocyanate (BITC), and glutathione peroxidase activity toward cumene hydroperoxide and linoleic acid-13-hydroperoxide. May be involved in the conjugation of reduced glutathione to a wide number of exogenous and endogenous hydrophobic electrophiles and have a detoxification role against certain herbicides. The chain is Glutathione S-transferase F9 from Arabidopsis thaliana (Mouse-ear cress).